A 219-amino-acid polypeptide reads, in one-letter code: Protein VERNALIZATION 2 (219 aa).

Positions Arg138 to Val180 constitute a CCT domain.

Mainly expressed in leaves, and at low levels in the shoot apical meristem (SAM).

The protein localises to the nucleus. Functionally, involved in the regulation of vernalization; this process in essential for flowering in cv. Bd29-1 but seems do not occur in cv. Bd21. This is Protein VERNALIZATION 2 from Brachypodium distachyon (Purple false brome).